Reading from the N-terminus, the 72-residue chain is Translation initiation factor IF-1 (72 aa).

The 72-residue stretch at Met1–Lys72 folds into the S1-like domain.

It belongs to the IF-1 family. In terms of assembly, component of the 30S ribosomal translation pre-initiation complex which assembles on the 30S ribosome in the order IF-2 and IF-3, IF-1 and N-formylmethionyl-tRNA(fMet); mRNA recruitment can occur at any time during PIC assembly.

The protein resides in the cytoplasm. Its function is as follows. One of the essential components for the initiation of protein synthesis. Stabilizes the binding of IF-2 and IF-3 on the 30S subunit to which N-formylmethionyl-tRNA(fMet) subsequently binds. Helps modulate mRNA selection, yielding the 30S pre-initiation complex (PIC). Upon addition of the 50S ribosomal subunit IF-1, IF-2 and IF-3 are released leaving the mature 70S translation initiation complex. The chain is Translation initiation factor IF-1 from Acholeplasma laidlawii (strain PG-8A).